Consider the following 296-residue polypeptide: Probable endonuclease 4 (296 aa).

Zn(2+) contacts are provided by H68, H109, E144, D178, H181, H213, D226, H228, and E258.

It belongs to the AP endonuclease 2 family. Zn(2+) serves as cofactor.

The enzyme catalyses Endonucleolytic cleavage to 5'-phosphooligonucleotide end-products.. Functionally, endonuclease IV plays a role in DNA repair. It cleaves phosphodiester bonds at apurinic or apyrimidinic (AP) sites, generating a 3'-hydroxyl group and a 5'-terminal sugar phosphate. The protein is Probable endonuclease 4 of Staphylococcus carnosus (strain TM300).